The primary structure comprises 139 residues: Large ribosomal subunit protein uL16 (139 aa).

Residues 74 to 94 (LTKKPAETRQGSGKGSPESWV) are disordered.

The protein belongs to the universal ribosomal protein uL16 family. Part of the 50S ribosomal subunit.

In terms of biological role, binds 23S rRNA and is also seen to make contacts with the A and possibly P site tRNAs. This is Large ribosomal subunit protein uL16 from Saccharopolyspora erythraea (strain ATCC 11635 / DSM 40517 / JCM 4748 / NBRC 13426 / NCIMB 8594 / NRRL 2338).